Here is a 395-residue protein sequence, read N- to C-terminus: MATPSLRSHEIPAHSQEAGNKSISSGSRRGLLWHLRARQSRVGLFEVGPGHELHRMTRMMQEGLWAATQVSKNNPPTGPTTQKDYLEVMTQVHEEGFELGTLAGPAFARLRKSIGLTEEDYQATLGPGDPYLQFFSTSKSKASFFLTHDQRFFVKTQRRHEVHVLLAHLPRYVEHLQQYPHSLLARLLGVYSLRVAQGKKKYFIIMQCIFYPTSRISERYDIKGCNISRWVDPAPEGSPLVLVLKDLNFQEKTMRLGAQRSWFLRQMELDTAFLREVNVLDYSLLVAIQFLHEDEKGIHHSVFSTFKSIQGVSKSKGTGDQNCRMLPDLPNALHILDGPDQRYFLGLVDMTTVYGFRKRLEHVWKMVRYPGQSVSTVSPAHYARRLCRWAEVHTE.

The interval 1-25 (MATPSLRSHEIPAHSQEAGNKSISS) is disordered. The PIPK domain occupies 37–394 (ARQSRVGLFE…RLCRWAEVHT (358 aa)).

Interacts with type I phosphatidylinositol 4-phosphate 5-kinases, including PIP5K1A and PIP5K1B. Highly expressed in brain and testis, relatively to heart, spleen, lung, liver, skeletal muscle and kidney.

The protein resides in the cytoplasm. Its subcellular location is the membrane. May act as a scaffold to localize and regulate type I phosphatidylinositol 4-phosphate 5-kinases to specific compartments within the cell, where they generate PI(4,5)P2 for actin nucleation, signaling and scaffold protein recruitment and conversion to PI(3,4,5)P3. The sequence is that of Phosphatidylinositol 4-phosphate 5-kinase-like protein 1 (Pip5kl1) from Mus musculus (Mouse).